The chain runs to 644 residues: Exoribonuclease 2 (644 aa).

Residues 189 to 516 form the RNB domain; it reads REDLTALDFV…NHRLLKAVIK (328 aa). The S1 motif domain maps to 561-643; sequence DTRFAAEIVD…ETRSIIARPV (83 aa).

This sequence belongs to the RNR ribonuclease family. RNase II subfamily.

It localises to the cytoplasm. The enzyme catalyses Exonucleolytic cleavage in the 3'- to 5'-direction to yield nucleoside 5'-phosphates.. Functionally, involved in mRNA degradation. Hydrolyzes single-stranded polyribonucleotides processively in the 3' to 5' direction. The sequence is that of Exoribonuclease 2 from Escherichia coli O8 (strain IAI1).